A 299-amino-acid chain; its full sequence is Oxygen-dependent coproporphyrinogen-III oxidase (299 aa).

Serine 92 is a substrate binding site. Histidine 96 and histidine 106 together coordinate a divalent metal cation. Histidine 106 functions as the Proton donor in the catalytic mechanism. 108-110 provides a ligand contact to substrate; that stretch reads NVR. A divalent metal cation-binding residues include histidine 145 and histidine 175. The segment at 240-275 is important for dimerization; sequence YVEFNLVWDRGTLFGLQTGGRTESILMSMPPLVRWE. 258–260 is a binding site for substrate; that stretch reads GGR.

The protein belongs to the aerobic coproporphyrinogen-III oxidase family. Homodimer. The cofactor is a divalent metal cation.

It is found in the cytoplasm. The enzyme catalyses coproporphyrinogen III + O2 + 2 H(+) = protoporphyrinogen IX + 2 CO2 + 2 H2O. It functions in the pathway porphyrin-containing compound metabolism; protoporphyrin-IX biosynthesis; protoporphyrinogen-IX from coproporphyrinogen-III (O2 route): step 1/1. Involved in the heme biosynthesis. Catalyzes the aerobic oxidative decarboxylation of propionate groups of rings A and B of coproporphyrinogen-III to yield the vinyl groups in protoporphyrinogen-IX. This is Oxygen-dependent coproporphyrinogen-III oxidase from Salmonella heidelberg (strain SL476).